We begin with the raw amino-acid sequence, 508 residues long: Photosystem II CP47 reaction center protein (508 aa).

A run of 6 helical transmembrane segments spans residues 21–36 (AVHI…WAGS), 101–115 (IVFS…IWHW), 140–156 (GIHL…FGAF), 203–218 (IAAG…FHLS), 237–252 (VLSS…AFVV), and 457–472 (SFAL…HGAR).

This sequence belongs to the PsbB/PsbC family. PsbB subfamily. As to quaternary structure, PSII is composed of 1 copy each of membrane proteins PsbA, PsbB, PsbC, PsbD, PsbE, PsbF, PsbH, PsbI, PsbJ, PsbK, PsbL, PsbM, PsbT, PsbX, PsbY, PsbZ, Psb30/Ycf12, at least 3 peripheral proteins of the oxygen-evolving complex and a large number of cofactors. It forms dimeric complexes. The cofactor is Binds multiple chlorophylls. PSII binds additional chlorophylls, carotenoids and specific lipids..

The protein localises to the plastid. It localises to the chloroplast thylakoid membrane. Its function is as follows. One of the components of the core complex of photosystem II (PSII). It binds chlorophyll and helps catalyze the primary light-induced photochemical processes of PSII. PSII is a light-driven water:plastoquinone oxidoreductase, using light energy to abstract electrons from H(2)O, generating O(2) and a proton gradient subsequently used for ATP formation. The protein is Photosystem II CP47 reaction center protein of Daucus carota (Wild carrot).